A 1170-amino-acid polypeptide reads, in one-letter code: Thrombospondin-1 (1170 aa).

An N-terminal signal peptide occupies residues 1-18; sequence MELLRGLGVLFLLHMCGS. The heparin-binding stretch occupies residues 47 to 95; it reads RLVKGQDLSSPAFRIENANLIPAVPDDKFQDLLDAVWADKGFIFLASLR. A Laminin G-like domain is found at 56 to 270; it reads SPAFRIENAN…HKTKDLQAIC (215 aa). Cysteine 171 and cysteine 232 are oxidised to a cystine. 2 N-linked (GlcNAc...) asparagine glycosylation sites follow: asparagine 248 and asparagine 360. The region spanning 316 to 373 is the VWFC domain; that stretch reads PLCFHNGVQYKNNEEWTVDSCTECHCQNSVTICKKVSCPIMPCSNATVPDGECCPRCW. TSP type-1 domains follow at residues 379-429, 435-490, and 492-547; these read DDGW…QECD, DGGW…DACP, and NGGW…QDCP. Tryptophan 385 carries a C-linked (Man) tryptophan glycan. 3 disulfide bridges follow: cysteine 391-cysteine 423, cysteine 395-cysteine 428, and cysteine 406-cysteine 413. C-linked (Man) tryptophan glycans are attached at residues tryptophan 438 and tryptophan 441. Cystine bridges form between cysteine 447–cysteine 484, cysteine 451–cysteine 489, and cysteine 462–cysteine 474. O-linked (Fuc...) threonine glycosylation is present at threonine 450. A glycan (C-linked (Man) tryptophan) is linked at tryptophan 498. 21 disulfide bridges follow: cysteine 504–cysteine 541, cysteine 508–cysteine 546, cysteine 519–cysteine 531, cysteine 551–cysteine 562, cysteine 556–cysteine 572, cysteine 575–cysteine 586, cysteine 592–cysteine 608, cysteine 599–cysteine 617, cysteine 620–cysteine 644, cysteine 650–cysteine 663, cysteine 657–cysteine 676, cysteine 678–cysteine 689, cysteine 705–cysteine 713, cysteine 718–cysteine 738, cysteine 754–cysteine 774, cysteine 777–cysteine 797, cysteine 813–cysteine 833, cysteine 836–cysteine 856, cysteine 874–cysteine 894, cysteine 910–cysteine 930, and cysteine 946–cysteine 1167. An O-linked (Fuc...) threonine glycan is attached at threonine 507. Positions 531–1152 are involved in retention in extracellular matrix (ECM); involved in trimer formation; that stretch reads CVGDVTENQV…YAGGRLGLFV (622 aa). Positions 547–587 constitute an EGF-like 1 domain; the sequence is PIDGCLSNPCFAGAKCTSYPDGSWKCGACPPGYSGNGIQCK. O-linked (Xyl) serine glycosylation occurs at serine 553. One can recognise an EGF-like 2 domain in the interval 646-690; that stretch reads PRNPCTDGTHDCNKNAKCNYLGHYSDPMYRCECKPGYAGNGIICG. TSP type-3 repeat units lie at residues 691–726, 727–762, 763–785, 786–821, 822–844, 845–882, 883–918, and 919–954; these read EDTD…NSGQ, EDYD…NPAQ, YDYD…NPDQ, ADTD…NVDQ, RDTD…NPDQ, LDSD…NANQ, ADHD…NPDQ, and KDSD…DISE. Asparagine 708 carries N-linked (GlcNAc...) asparagine glycosylation. Residues 840 to 934 form a disordered region; it reads HNPDQLDSDS…GRGDACKDDF (95 aa). 2 stretches are compositionally biased toward basic and acidic residues: residues 883-894 and 917-934; these read ADHDKDGKGDAC and DQKD…KDDF. The Cell attachment site motif lies at 926–928; it reads RGD. The TSP C-terminal domain maps to 958 to 1170; that stretch reads RRFQMIPLDP…SDMKYECRDS (213 aa). Asparagine 1067 is a glycosylation site (N-linked (GlcNAc...) asparagine).

It belongs to the thrombospondin family. As to quaternary structure, homotrimer; disulfide-linked. Can bind to fibrinogen, fibronectin, laminin, type V collagen and integrins alpha-V/beta-1, alpha-V/beta-3 and alpha-IIb/beta-3. Binds heparin. Interacts (via the C-terminal domain) with CD47. Interacts (via the TSP type I repeats) with CD36; the interaction conveys an antiangiogenic effect. Interacts (via the TSP type I repeats) with HRG; the interaction blocks the antiangiogenic effect of THBS1 with CD36. Interacts with ATF6 (via lumenal domain). Interacts with FN1; this interaction is enhanced by TNFAIP6, which may act as a bridging molecule between FN1 and THBS1. Interacts with SIRPA; the interaction stimulates phosphorylation of SIRPA.

It localises to the secreted. It is found in the cell surface. Its subcellular location is the extracellular space. The protein resides in the extracellular matrix. The protein localises to the endoplasmic reticulum. It localises to the sarcoplasmic reticulum. In terms of biological role, adhesive glycoprotein that mediates cell-to-cell and cell-to-matrix interactions. Multifunctional, involved in inflammation, angiogenesis, wound healing, reactive oxygen species (ROS) signaling, nitrous oxide (NO) signaling, apoptosis, senescence, aging, cellular self-renewal, stemness, and cardiovascular and metabolic homeostasis. Negatively modulates dendritic cell activation and cytokine release, as part of an autocrine feedback loop, contributing to the resolution of inflammation and immune homeostasis. Ligand for receptor CD47. Modulates nitrous oxide (NO) signaling via CD47, hence playing a role as a pressor agent, supporting blood pressure. Plays a role in endothelial cell senescence, acting via CD47, by increasing the abundance and activation of NADPH oxidase NOX1, and so generating excess ROS. Inhibits stem cell self-renewal, acting via CD47 signaling, probably by regulation of the stem cell transcription factors POU5F1/OCT4, SOX2, MYC/c-Myc and KLF4. Negatively modulates wound healing, acting via CD47. Ligand for receptor CD36. Involved in inducing apoptosis in podocytes in response to elevated free fatty acids, acting via CD36. Plays a role in suppressing angiogenesis, acting, depending on context, via CD36 or CD47. Promotes cellular senescence in a TP53-CDKN1A-RB1 signaling-dependent manner. Ligand for immunoglobulin-like cell surface receptor SIRPA. Involved in ROS signaling in non-phagocytic cells, stimulating NADPH oxidase-derived ROS production, acting via interaction with SIRPA. Plays a role in metabolic dysfunction in diet-induced obesity, perhaps acting by exacerbating adipose inflammatory activity; its effects may be mediated, at least in part, through enhanced adipocyte proliferation. Plays a role in ER stress response, via its interaction with the activating transcription factor 6 alpha (ATF6) which produces adaptive ER stress response factors. May be involved in age-related conditions, including metabolic dysregulation, during normal aging. This Mus musculus (Mouse) protein is Thrombospondin-1 (Thbs1).